The following is a 257-amino-acid chain: Imidazole glycerol phosphate synthase subunit HisF (257 aa).

Catalysis depends on residues Asp-11 and Asp-130.

The protein belongs to the HisA/HisF family. Heterodimer of HisH and HisF.

It is found in the cytoplasm. It carries out the reaction 5-[(5-phospho-1-deoxy-D-ribulos-1-ylimino)methylamino]-1-(5-phospho-beta-D-ribosyl)imidazole-4-carboxamide + L-glutamine = D-erythro-1-(imidazol-4-yl)glycerol 3-phosphate + 5-amino-1-(5-phospho-beta-D-ribosyl)imidazole-4-carboxamide + L-glutamate + H(+). The protein operates within amino-acid biosynthesis; L-histidine biosynthesis; L-histidine from 5-phospho-alpha-D-ribose 1-diphosphate: step 5/9. In terms of biological role, IGPS catalyzes the conversion of PRFAR and glutamine to IGP, AICAR and glutamate. The HisF subunit catalyzes the cyclization activity that produces IGP and AICAR from PRFAR using the ammonia provided by the HisH subunit. The sequence is that of Imidazole glycerol phosphate synthase subunit HisF from Vibrio cholerae serotype O1 (strain ATCC 39541 / Classical Ogawa 395 / O395).